Here is a 131-residue protein sequence, read N- to C-terminus: Lysosomal enzyme trafficking factor (131 aa).

The next 2 membrane-spanning stretches (helical) occupy residues 8 to 28 (MGWI…YYVF) and 66 to 86 (LPFW…FLFL).

It belongs to the LYSET family.

Its subcellular location is the golgi apparatus membrane. In terms of biological role, required for mannose-6-phosphate-dependent trafficking of lysosomal enzymes. LYSET bridges GlcNAc-1-phosphate transferase (GNPTAB), to the membrane-bound transcription factor site-1 protease (MBTPS1), thus allowing proteolytic activation of the GNPTAB. GNPTAB is involved in the regulation of M6P-dependent Golgi-to-lysosome trafficking of lysosomal enzymes. LYSET is thus an essential factor for maturation and delivery of lysosomal hydrolases. This Xenopus laevis (African clawed frog) protein is Lysosomal enzyme trafficking factor (lyset-a).